The following is a 201-amino-acid chain: Cell division protein SepF (201 aa).

Residues 1 to 94 form a disordered region; sequence MALKDLFSGF…TTSKNNARNV (94 aa). Positions 13–28 are enriched in acidic residues; sequence VEEEDDELEAPPEENE. A compositionally biased stretch (low complexity) spans 35-44; that stretch reads PKQQAQSQNQ. Positions 59–88 are enriched in polar residues; that stretch reads SIQSVPKKQSTRLQQSSGERKYQMNNTTSK.

Belongs to the SepF family. Homodimer. Interacts with FtsZ.

Its subcellular location is the cytoplasm. Its function is as follows. Cell division protein that is part of the divisome complex and is recruited early to the Z-ring. Probably stimulates Z-ring formation, perhaps through the cross-linking of FtsZ protofilaments. Its function overlaps with FtsA. In Staphylococcus saprophyticus subsp. saprophyticus (strain ATCC 15305 / DSM 20229 / NCIMB 8711 / NCTC 7292 / S-41), this protein is Cell division protein SepF.